A 174-amino-acid chain; its full sequence is Large ribosomal subunit protein uL10 (174 aa).

It belongs to the universal ribosomal protein uL10 family. Part of the ribosomal stalk of the 50S ribosomal subunit. The N-terminus interacts with L11 and the large rRNA to form the base of the stalk. The C-terminus forms an elongated spine to which L12 dimers bind in a sequential fashion forming a multimeric L10(L12)X complex.

Its function is as follows. Forms part of the ribosomal stalk, playing a central role in the interaction of the ribosome with GTP-bound translation factors. The chain is Large ribosomal subunit protein uL10 from Acidiphilium cryptum (strain JF-5).